Reading from the N-terminus, the 353-residue chain is B1 bradykinin receptor (353 aa).

Residues 1-41 (MASQTLVVFQASNQSQLPPPNATLCDGAQEAWHLLHKVLPT) are Extracellular-facing. Residues Asn13 and Asn21 are each glycosylated (N-linked (GlcNAc...) asparagine). A helical transmembrane segment spans residues 42-62 (CVVAICSGGLLGNLFVLSVFL). Residues 63 to 72 (VPRRRLNAAE) are Cytoplasmic-facing. Residues 73-93 (IYLAHLAASDLVFALGLPFWA) traverse the membrane as a helical segment. Over 94–110 (ETIRNGFHWPFGAPLCR) the chain is Extracellular. Residues Cys109 and Cys189 are joined by a disulfide bond. Residues 111–131 (VVNGVIKANLFISIFLVVAIS) form a helical membrane-spanning segment. Residues 132–154 (RDRYRALVHPVASWRRRRRRHWA) lie on the Cytoplasmic side of the membrane. A helical transmembrane segment spans residues 155-175 (QATCVLIWTAGGLLSIPTFLL). Topologically, residues 176 to 207 (RSVQVVPELNVSACVLPFPHEAWAFVRTVELN) are extracellular. Residue Asn185 is glycosylated (N-linked (GlcNAc...) asparagine). A helical transmembrane segment spans residues 208-228 (VLGFLLPLAAILFFNYHILAA). At 229 to 251 (LRGREQLSRTRCGGPRDGKTTAL) the chain is on the cytoplasmic side. The chain crosses the membrane as a helical span at residues 252–272 (ILTLVAVFLLCWTPYHVCAFL). Topologically, residues 273–295 (EFLLHVRAIRGCFWEDFTDLGLQ) are extracellular. A helical transmembrane segment spans residues 296-316 (YTNFFAFINSCLNPVIYVFWG). Residues 317-353 (QLFRTKIWELYHRCLPRKLTAVSSSRRKEIFQIFWRN) are Cytoplasmic-facing. Cys330 carries the S-palmitoyl cysteine lipid modification.

Belongs to the G-protein coupled receptor 1 family. Bradykinin receptor subfamily. BDKRB1 sub-subfamily.

The protein localises to the cell membrane. In terms of biological role, this is a receptor for bradykinin. Could be a factor in chronic pain and inflammation. In Sus scrofa (Pig), this protein is B1 bradykinin receptor (BDKRB1).